The primary structure comprises 215 residues: Deoxyribose-phosphate aldolase (215 aa).

Asp-90 (proton donor/acceptor) is an active-site residue. The Schiff-base intermediate with acetaldehyde role is filled by Lys-152. Catalysis depends on Lys-181, which acts as the Proton donor/acceptor.

It belongs to the DeoC/FbaB aldolase family. DeoC type 1 subfamily.

The protein resides in the cytoplasm. It carries out the reaction 2-deoxy-D-ribose 5-phosphate = D-glyceraldehyde 3-phosphate + acetaldehyde. The protein operates within carbohydrate degradation; 2-deoxy-D-ribose 1-phosphate degradation; D-glyceraldehyde 3-phosphate and acetaldehyde from 2-deoxy-alpha-D-ribose 1-phosphate: step 2/2. Its function is as follows. Catalyzes a reversible aldol reaction between acetaldehyde and D-glyceraldehyde 3-phosphate to generate 2-deoxy-D-ribose 5-phosphate. In Ureaplasma urealyticum serovar 10 (strain ATCC 33699 / Western), this protein is Deoxyribose-phosphate aldolase.